Consider the following 108-residue polypeptide: Ig kappa chain V region 120 (108 aa).

Positions 1 to 23 (AFELTQTPSSVEAAVGGTVTIKC) are framework-1. The tract at residues 24-34 (QSSQSIGTYLA) is complementarity-determining-1. Residues 35-49 (WYZZKPGQPPKLLIY) form a framework-2 region. The segment at 50–56 (RASTLAS) is complementarity-determining-2. The interval 57 to 88 (GVSSRFKGSGSGTEFTLTISGVECADAATYYC) is framework-3. Residues 89 to 97 (QGTYYZSAS) form a complementarity-determining-3 region. Residues 98-107 (FGGGTEVVVK) form a framework-4 region.

This is Ig kappa chain V region 120 from Oryctolagus cuniculus (Rabbit).